An 80-amino-acid chain; its full sequence is UPF0154 protein SZO_03240 (80 aa).

The helical transmembrane segment at 4 to 24 (AIWILLIIVALTAGLFGGIFI) threads the bilayer.

The protein belongs to the UPF0154 family.

Its subcellular location is the cell membrane. The polypeptide is UPF0154 protein SZO_03240 (Streptococcus equi subsp. zooepidemicus (strain H70)).